The sequence spans 796 residues: Bud site selection protein 27 (796 aa).

Positions 81–121 (KEEAITFVDDKLKLMEDAIEQFNLKIEEAKKTLDNLNHMED) form a coiled coil. The segment covering 152–168 (VISSSVTPTTKQPSQSN) has biased composition (polar residues). Disordered stretches follow at residues 152–197 (VISS…EENL), 300–344 (LRAQ…QVGF), 421–458 (EGEA…TTRS), 535–624 (EKEP…AKTG), and 752–796 (ATAS…DSKP). 2 stretches are compositionally biased toward basic and acidic residues: residues 169 to 197 (SKKE…EENL) and 306 to 318 (SQDH…DVNK). Positions 427–441 (SNRRTRVSRFRKDRA) are enriched in basic residues. The segment covering 535 to 550 (EKEPEINSKSEFETPF) has biased composition (basic and acidic residues). Residues 551–568 (KKKKLKSLQKPRSSKSMK) are compositionally biased toward basic residues. Over residues 579–589 (ISDDDYDDDDD) the composition is skewed to acidic residues. A Phosphoserine modification is found at serine 580. Positions 601-610 (NNTDEQDKFP) are enriched in basic and acidic residues.

This sequence belongs to the prefoldin subunit alpha family.

The protein localises to the cytoplasm. In terms of biological role, involved in gene expression controlled by TOR kinase and nutrient signaling. May also be involved in positioning the proximal bud pole signal. This is Bud site selection protein 27 (BUD27) from Saccharomyces cerevisiae (strain ATCC 204508 / S288c) (Baker's yeast).